The chain runs to 685 residues: Probable transketolase (685 aa).

H32 provides a ligand contact to substrate. Thiamine diphosphate is bound by residues H72 and 121 to 123 (GPL). Mg(2+) is bound at residue D162. Thiamine diphosphate is bound by residues G163 and N192. Positions 192 and 194 each coordinate Mg(2+). Residues H268, R363, and S390 each contribute to the substrate site. H268 is a binding site for thiamine diphosphate. Thiamine diphosphate-binding residues include E422 and F448. Catalysis depends on E422, which acts as the Proton donor. Residues H472, D480, and R531 each contribute to the substrate site.

Belongs to the transketolase family. In terms of assembly, homodimer. Requires Mg(2+) as cofactor. It depends on Ca(2+) as a cofactor. The cofactor is Mn(2+). Co(2+) is required as a cofactor. Thiamine diphosphate serves as cofactor.

The catalysed reaction is D-sedoheptulose 7-phosphate + D-glyceraldehyde 3-phosphate = aldehydo-D-ribose 5-phosphate + D-xylulose 5-phosphate. In terms of biological role, catalyzes the transfer of a two-carbon ketol group from a ketose donor to an aldose acceptor, via a covalent intermediate with the cofactor thiamine pyrophosphate. The chain is Probable transketolase from Schizosaccharomyces pombe (strain 972 / ATCC 24843) (Fission yeast).